A 136-amino-acid polypeptide reads, in one-letter code: Small ribosomal subunit protein uS9 (136 aa).

The tract at residues 97 to 136 (SPDNRKPLKTEGHLSRDPRAKERRKYGLKKARKAPQFSKR) is disordered. The segment covering 98-116 (PDNRKPLKTEGHLSRDPRA) has biased composition (basic and acidic residues). Residues 117–136 (KERRKYGLKKARKAPQFSKR) are compositionally biased toward basic residues.

It belongs to the universal ribosomal protein uS9 family.

This is Small ribosomal subunit protein uS9 from Prochlorococcus marinus (strain MIT 9215).